We begin with the raw amino-acid sequence, 1563 residues long: Rab-3-interacting molecule unc-10 (1563 aa).

Residues 7–133 (MPDLSHLSAE…AKTGKWFQPE (127 aa)) form the RabBD domain. Residues 25 to 35 (FKRQKDEEAKE) are compositionally biased toward basic and acidic residues. The segment at 25–50 (FKRQKDEEAKETQISQKASEELSELD) is disordered. Residues 66–121 (TQDDAICQICQKTKFADGIGHKCFYCQLRSCARCGGRAQSKNKAIWACSLCQKRQQ) form an FYVE-type zinc finger. Zn(2+) is bound by residues cysteine 72, cysteine 75, cysteine 88, cysteine 91, cysteine 96, cysteine 99, cysteine 113, and cysteine 116. Disordered regions lie at residues 128–466 (KWFQ…DHLN) and 582–605 (GGLDMQANRRRDKSLSLSPSRNDH). Over residues 172–182 (NTPNYQNNQQP) the composition is skewed to polar residues. Low complexity-rich tracts occupy residues 190–284 (NHNQ…RNQT) and 300–316 (QTPQQQPSQYQNNVGAA). The span at 326–345 (QEQHHQQMNEQRTDNNRMRE) shows a compositional bias: basic and acidic residues. Polar residues-rich tracts occupy residues 356–367 (RQPSLEQTTPMN) and 379–389 (QRPTFYTGNSE). Low complexity predominate over residues 395 to 415 (FDGQMQQGSQQNNQNQNQNNR). The 91-residue stretch at 643–733 (HMILHRTENS…DTSVELIVSR (91 aa)) folds into the PDZ domain. Positions 840–962 (IFGRIEVSFV…PLDGEHSLMC (123 aa)) constitute a C2 1 domain. Disordered regions lie at residues 1054 to 1163 (ENDI…YLGD), 1177 to 1311 (GQMT…GGSA), and 1346 to 1373 (VGIPGNLSSDRLTEPTPPFLKQASKEST). Over residues 1086–1097 (WTQNHQRQSGYT) the composition is skewed to polar residues. Residues 1112–1121 (YNRRQQRRPR) show a composition bias toward basic residues. Residues 1129–1154 (MEREDMYDPTRKHRDDNEYSMRESVR) are compositionally biased toward basic and acidic residues. Over residues 1181 to 1230 (PKQHNQQHQPHPLSQAHQQQQTAGVQPQHHQGFQQQQHPQQPNQQMQQMQ) the composition is skewed to low complexity. Positions 1242 to 1255 (GSETLSVHSTNSMP) are enriched in polar residues. Low complexity predominate over residues 1256 to 1277 (TTMTTVNRRNMNANNTSNDNTS). The segment covering 1278 to 1288 (FAETPTANTNR) has biased composition (polar residues). The span at 1297 to 1311 (NSLASSSSVAGGGSA) shows a compositional bias: low complexity. The 120-residue stretch at 1417-1536 (VLGEIQIALM…LGSQPLIGWY (120 aa)) folds into the C2 2 domain.

In terms of tissue distribution, restricted to discrete puncta in synapse-rich regions of the nervous system including the nerve ring, the ventral nerve cord and the dorsal nerve cord. Localized expression was found in the head.

It is found in the synapse. Functionally, regulates the efficiency of a post-docking step of the release pathway. Acts after vesicle docking likely via regulating priming. May regulate the conformational changes in syntaxin. Binding of vesicles via rab-3[GTP] to Rim may signal the presence of a docked synaptic vesicle. Rim may then signal to unc-13 to change the conformation of syntaxin from the closed to the open state. Syntaxin could then engage synaptobrevin on the docked vesicle to form SNARE complexes and to prime the vesicle for release. Not required for the development or the structural organization of synapses. May play a role in regulating entry into the dauer state. This chain is Rab-3-interacting molecule unc-10, found in Caenorhabditis elegans.